A 285-amino-acid chain; its full sequence is Homeobox protein vex1 (285 aa).

2 disordered regions span residues K30–V54 and N69–E88. The segment covering N69 to L80 has biased composition (basic and acidic residues). A DNA-binding region (homeobox) is located at residues A131–T190.

Widely expressed in the embryo prior to gastrulation. Becomes restricted to the ventral marginal zone by mid/late gastrulation. Ventral localization persists during gastrulation and neurulation in the ventral region of the closed blastopore and in the proctodeum during tail bud stages.

It localises to the nucleus. Its function is as follows. Transcriptional repressor. Acts in a ventral signaling pathway downstream of bmp4 to antagonize the Spemann organizer and ventrally pattern the embryonic mesoderm. Represses transcription of the dorsal genes gsc and otx2. This Xenopus laevis (African clawed frog) protein is Homeobox protein vex1.